A 369-amino-acid chain; its full sequence is N-succinyl-L-Arg/Lys racemase (369 aa).

Substrate contacts are provided by residues Tyr26, Asp51, 161 to 163 (KMK), and 191 to 193 (DVN). Mg(2+) contacts are provided by Asp191, Glu218, and Asp243. Substrate-binding positions include Lys267, 295–296 (SM), and 320–322 (ELT).

It belongs to the mandelate racemase/muconate lactonizing enzyme family. It depends on Mg(2+) as a cofactor.

Its function is as follows. Catalyzes efficient racemization of N-succinyl-L-Arg and N-succinyl-L-Lys, suggesting that these are physiological substrates of this enzyme. Has low activity with L-Asp-L-Lys, and even lower activity with L-Leu-L-Arg, L-Leu-L-Lys, N-succinyl-L-His and N-succinyl-L-Met (in vitro). The polypeptide is N-succinyl-L-Arg/Lys racemase (Bacillus cereus (strain ATCC 14579 / DSM 31 / CCUG 7414 / JCM 2152 / NBRC 15305 / NCIMB 9373 / NCTC 2599 / NRRL B-3711)).